We begin with the raw amino-acid sequence, 64 residues long: Large ribosomal subunit protein uL29 (64 aa).

Belongs to the universal ribosomal protein uL29 family.

The sequence is that of Large ribosomal subunit protein uL29 from Burkholderia ambifaria (strain MC40-6).